The following is a 756-amino-acid chain: Subtilisin-like protease SBT3.9 (756 aa).

A signal peptide spans 1–25 (MSKTILFLALFLSIVLNVQISFVVA). Positions 26–108 (ESKVYVVYLG…VIPNTLYEMT (83 aa)) are cleaved as a propeptide — activation peptide. One can recognise an Inhibitor I9 domain in the interval 29–106 (VYVVYLGEKE…VQVIPNTLYE (78 aa)). The Peptidase S8 domain occupies 112 to 603 (TWDYLGVSPG…GGLINPEKAV (492 aa)). D142 serves as the catalytic Charge relay system. N-linked (GlcNAc...) asparagine glycans are attached at residues N175 and N202. H218 acts as the Charge relay system in catalysis. N-linked (GlcNAc...) asparagine glycosylation is found at N233, N357, N395, and N519. The 75-residue stretch at 386-460 (DCEKLSANPN…ELGTDILFYI (75 aa)) folds into the PA domain. Residue S534 is the Charge relay system of the active site.

The protein belongs to the peptidase S8 family.

It is found in the secreted. This Arabidopsis thaliana (Mouse-ear cress) protein is Subtilisin-like protease SBT3.9.